The primary structure comprises 789 residues: Ribosomal protein S6 kinase alpha-5 (789 aa).

The Protein kinase 1 domain maps to 39-308 (FELLKVLGTG…ADEIKQHPFF (270 aa)). ATP is bound by residues 45-53 (LGTGAYGKV) and lysine 71. The active-site Proton acceptor is aspartate 167. The residue at position 202 (serine 202) is a Phosphoserine; by autocatalysis. The 69-residue stretch at 309–377 (QNINWDDLAA…VAPSILFKRN (69 aa)) folds into the AGC-kinase C-terminal domain. At serine 350 the chain carries Phosphoserine. Phosphoserine; by autocatalysis is present on residues serine 366 and serine 371. The Protein kinase 2 domain maps to 416 to 677 (DLKEKPLGEG…MSSLRYNEWL (262 aa)). ATP-binding positions include 422 to 430 (LGEGSFSIC) and lysine 445. Aspartate 534 functions as the Proton acceptor in the catalytic mechanism. Phosphothreonine occurs at positions 571 and 690. The disordered stretch occupies residues 731–789 (AKRRKMKKTSTSTETRSSSSESSHSSSSHSHGKTTPTKTLQPTNPTDSNNPETIFQFSD). The span at 739–769 (TSTSTETRSSSSESSHSSSSHSHGKTTPTKT) shows a compositional bias: low complexity. Phosphoserine; by autocatalysis occurs at positions 740, 742, and 748. The span at 770–789 (LQPTNPTDSNNPETIFQFSD) shows a compositional bias: polar residues.

The protein belongs to the protein kinase superfamily. AGC Ser/Thr protein kinase family. S6 kinase subfamily. The cofactor is Mg(2+). In terms of processing, ser-366 and Thr-571 phosphorylation is required for kinase activity. Ser-366 and Ser-202 are autophosphorylated by the C-terminal kinase domain, and their phosphorylation is essential for the catalytic activity of the N-terminal kinase domain. Phosphorylated at Ser-350, Thr-571 and Thr-690 by MAP kinases. Autophosphorylated at Ser-740, Ser-742 and Ser-748 by the N-terminal kinase domain. Widely expressed with high levels in heart, brain and placenta. Less abundant in lung, kidney and liver.

The protein resides in the nucleus. It catalyses the reaction L-seryl-[protein] + ATP = O-phospho-L-seryl-[protein] + ADP + H(+). It carries out the reaction L-threonyl-[protein] + ATP = O-phospho-L-threonyl-[protein] + ADP + H(+). With respect to regulation, activated by phosphorylation at Ser-350, Thr-571 and Thr-690 by MAP kinases, and by further autophosphorylation of Ser-202, Ser-366 and Ser-371 by the activated C-terminal kinase domain. The active N-terminal kinase domain finally phosphorylates downstream substrates, as well as Ser-740, Ser-742 and Ser-748 in its own C-terminal region. In terms of biological role, serine/threonine-protein kinase that is required for the mitogen or stress-induced phosphorylation of the transcription factors CREB1 and ATF1 and that contributes to gene activation by histone phosphorylation. Phosphorylates CREB1 and ATF1 in response to mitogenic or stress stimuli such as UV-C irradiation, epidermal growth factor (EGF) and anisomycin. Directly represses transcription via phosphorylation of 'Ser-1' of histone H2A. Phosphorylates 'Ser-10' of histone H3 in response to mitogenics, stress stimuli and EGF, which results in the transcriptional activation of several immediate early genes, including proto-oncogenes c-fos/FOS and c-jun/JUN. May also phosphorylate 'Ser-28' of histone H3. Mediates the mitogen- and stress-induced phosphorylation of high mobility group protein 1 (HMGN1/HMG14). The protein is Ribosomal protein S6 kinase alpha-5 (RPS6KA5) of Gallus gallus (Chicken).